Reading from the N-terminus, the 331-residue chain is Small ribosomal subunit protein uS2 (331 aa).

This sequence belongs to the universal ribosomal protein uS2 family.

The chain is Small ribosomal subunit protein uS2 from Rhodopseudomonas palustris (strain BisB5).